The sequence spans 254 residues: Homeobox protein BarH-like 1 (254 aa).

Positions 1-20 (MQRPGEPGAARFGPPEGCAD) are disordered. Residues 142 to 201 (GRRSRTVFTELQLMGLEKRFEKQKYLSTPDRIDLAESLGLSQLQVKTWYQNRRMKWKKIV) constitute a DNA-binding region (homeobox). Positions 204–254 (GGGLESPTKPKGRPKKNSIPTSEQLTEQERAKDAEKPAEVPGEPSDRSRED) are disordered. Over residues 230–254 (EQERAKDAEKPAEVPGEPSDRSRED) the composition is skewed to basic and acidic residues.

It belongs to the BAR homeobox family. As to expression, widely expressed. Expressed at higher levels in testis and heart. Detected in craniofacial tissue and adult iris, but not in lymphocytes, fibroblasts, choroid retina, retinal pigment epithelium, kidney, or fetal liver.

The protein resides in the nucleus. Transcription factor, which is involved in craniofacial development, in odontogenesis and in stomach organogenesis. May have a role in the differentiation of molars from incisors. Plays a role in suppressing endodermal Wnt activity. Binds to a regulatory module of the NCAM promoter. The protein is Homeobox protein BarH-like 1 (BARX1) of Homo sapiens (Human).